Consider the following 350-residue polypeptide: 3-isopropylmalate dehydrogenase (350 aa).

76–87 (GPKWDNAPKRPE) is a binding site for NAD(+). The substrate site is built by R94, R104, R132, and D217. D217, D241, and D245 together coordinate Mg(2+). 275–287 (GSAPDIANQNIAN) contacts NAD(+).

This sequence belongs to the isocitrate and isopropylmalate dehydrogenases family. LeuB type 1 subfamily. In terms of assembly, homodimer. The cofactor is Mg(2+). Mn(2+) is required as a cofactor.

The protein resides in the cytoplasm. The enzyme catalyses (2R,3S)-3-isopropylmalate + NAD(+) = 4-methyl-2-oxopentanoate + CO2 + NADH. The protein operates within amino-acid biosynthesis; L-leucine biosynthesis; L-leucine from 3-methyl-2-oxobutanoate: step 3/4. In terms of biological role, catalyzes the oxidation of 3-carboxy-2-hydroxy-4-methylpentanoate (3-isopropylmalate) to 3-carboxy-4-methyl-2-oxopentanoate. The product decarboxylates to 4-methyl-2 oxopentanoate. This Listeria monocytogenes serovar 1/2a (strain ATCC BAA-679 / EGD-e) protein is 3-isopropylmalate dehydrogenase.